A 326-amino-acid chain; its full sequence is E3 ubiquitin-protein ligase SINAT3 (326 aa).

The tract at residues 1–44 (MDLDSMDCTSTMDVTDDEEIHQDRHSYASVSKHHHTNNNTTNVN) is disordered. Residues 63-99 (CPVCTNSMYPPIHQCHNGHTLCSTCKARVHNRCPTCR) form an RING-type zinc finger. Residues 113–306 (VAESLELPCK…KELKLRVTGR (194 aa)) form an SBD region. The SIAH-type zinc-finger motif lies at 116-176 (SLELPCKHMS…LVAHLRDDHK (61 aa)). Residues C121, C128, H140, C144, C151, C158, H170, and H175 each coordinate Zn(2+).

This sequence belongs to the SINA (Seven in absentia) family. Interacts with SINAT6. Interacts with WAV3. Interacts with FREE1. Interacts with ELC/VPS23A.

It is found in the endosome. It localises to the multivesicular body. Its subcellular location is the cytoplasmic vesicle. The protein localises to the autophagosome. It catalyses the reaction S-ubiquitinyl-[E2 ubiquitin-conjugating enzyme]-L-cysteine + [acceptor protein]-L-lysine = [E2 ubiquitin-conjugating enzyme]-L-cysteine + N(6)-ubiquitinyl-[acceptor protein]-L-lysine.. The protein operates within protein modification; protein ubiquitination. Functionally, E3 ubiquitin-protein ligase that mediates ubiquitination and subsequent proteasomal degradation of target proteins. E3 ubiquitin ligases accept ubiquitin from an E2 ubiquitin-conjugating enzyme in the form of a thioester and then directly transfers the ubiquitin to targeted substrates. It probably triggers the ubiquitin-mediated degradation of different substrates. Modulates directly the ubiquitination and proteasomal-dependent degradation of FREE1, a component of the ESCRT-I complex. Modulates directly the ubiquitination and proteasomal-dependent degradation of ELC/VPS23A, a component of the ESCRT-I complex. This is E3 ubiquitin-protein ligase SINAT3 from Arabidopsis thaliana (Mouse-ear cress).